The following is a 505-amino-acid chain: Nostrin (505 aa).

The region spanning 1–260 (MRDPLTDCSY…AISKIDIEKD (260 aa)) is the F-BAR domain. Coiled-coil stretches lie at residues 101-128 (AHQV…LVIS), 160-222 (ITTE…RIQL), and 295-332 (KERQ…AYSS). Position 114 is a phosphoserine (Ser-114). In terms of domain architecture, REM-1 spans 292–372 (AMSKERQTSS…SYKLSSVLAE (81 aa)). The SH3 domain occupies 437-496 (LGNGLCKALYPFQARQDDELDLEKGDIVTIHKKKDEGWWFGSLKGKKGHFPAAYVEELPL). Ser-478 carries the phosphoserine modification.

In terms of assembly, homotrimer. Interacts with DAB2. Interacts with NOS3, DNM2, WASL and CAV1. Interacts (via SH3 domain) with DNM2; this interaction allows the recruitment of NOS3 to dynamin-positive structures. Present in pulmonary arterial endothelial cells (at protein level).

The protein localises to the cell membrane. Its subcellular location is the cytoplasmic vesicle. It is found in the cytoplasm. The protein resides in the cytoskeleton. Multivalent adapter protein which may decrease NOS3 activity by inducing its translocation away from the plasma membrane. The sequence is that of Nostrin from Bos taurus (Bovine).